We begin with the raw amino-acid sequence, 700 residues long: Elongation factor G 2 (700 aa).

A tr-type G domain is found at 8 to 290; the sequence is ERYRNIGISA…AVVDYLPSPI (283 aa). GTP-binding positions include 17-24, 88-92, and 142-145; these read AHIDAGKT, DTPGH, and NKMD.

The protein belongs to the TRAFAC class translation factor GTPase superfamily. Classic translation factor GTPase family. EF-G/EF-2 subfamily.

The protein resides in the cytoplasm. Functionally, catalyzes the GTP-dependent ribosomal translocation step during translation elongation. During this step, the ribosome changes from the pre-translocational (PRE) to the post-translocational (POST) state as the newly formed A-site-bound peptidyl-tRNA and P-site-bound deacylated tRNA move to the P and E sites, respectively. Catalyzes the coordinated movement of the two tRNA molecules, the mRNA and conformational changes in the ribosome. The sequence is that of Elongation factor G 2 (fusB) from Ralstonia nicotianae (strain ATCC BAA-1114 / GMI1000) (Ralstonia solanacearum).